Here is a 225-residue protein sequence, read N- to C-terminus: Cytidylate kinase (225 aa).

Glycine 11–threonine 19 lines the ATP pocket.

This sequence belongs to the cytidylate kinase family. Type 1 subfamily.

The protein localises to the cytoplasm. The catalysed reaction is CMP + ATP = CDP + ADP. The enzyme catalyses dCMP + ATP = dCDP + ADP. This Shouchella clausii (strain KSM-K16) (Alkalihalobacillus clausii) protein is Cytidylate kinase.